Reading from the N-terminus, the 228-residue chain is Cytochrome b-c1 complex subunit Rieske, mitochondrial (228 aa).

A mitochondrion-targeting transit peptide spans 1 to 26; the sequence is MLAKQFISKSLASSLRRLLPVSSTAS. Residues 27 to 63 lie on the Mitochondrial matrix side of the membrane; sequence SLKGSMMTIPKFTSIRTYTDSPEMPDFSEYQTKSTGD. The helical transmembrane segment at 64-93 threads the bilayer; it reads RSRVISYAMVGTMGALTAAGAQATVHDFLA. Topologically, residues 94-228 are mitochondrial intermembrane; the sequence is SWSASADVLA…TFEGSKIIIG (135 aa). Residues 139 to 227 form the Rieske domain; it reads IQEANSVDIS…YTFEGSKIII (89 aa). Cys172, His174, Cys191, and His194 together coordinate [2Fe-2S] cluster. A disulfide bridge links Cys177 with Cys193.

Belongs to the Rieske iron-sulfur protein family. In terms of assembly, component of the ubiquinol-cytochrome c oxidoreductase (cytochrome b-c1 complex, complex III, CIII), a multisubunit enzyme composed of 3 respiratory subunits cytochrome b, cytochrome c1 and Rieske protein, 2 core protein subunits, and additional low-molecular weight protein subunits. The complex exists as an obligatory dimer and forms supercomplexes (SCs) in the inner mitochondrial membrane with cytochrome c oxidase (complex IV, CIV). It depends on [2Fe-2S] cluster as a cofactor.

The protein resides in the mitochondrion inner membrane. The catalysed reaction is a quinol + 2 Fe(III)-[cytochrome c](out) = a quinone + 2 Fe(II)-[cytochrome c](out) + 2 H(+)(out). Functionally, component of the ubiquinol-cytochrome c oxidoreductase, a multisubunit transmembrane complex that is part of the mitochondrial electron transport chain which drives oxidative phosphorylation. The respiratory chain contains 3 multisubunit complexes succinate dehydrogenase (complex II, CII), ubiquinol-cytochrome c oxidoreductase (cytochrome b-c1 complex, complex III, CIII) and cytochrome c oxidase (complex IV, CIV), that cooperate to transfer electrons derived from NADH and succinate to molecular oxygen, creating an electrochemical gradient over the inner membrane that drives transmembrane transport and the ATP synthase. The cytochrome b-c1 complex catalyzes electron transfer from ubiquinol to cytochrome c, linking this redox reaction to translocation of protons across the mitochondrial inner membrane, with protons being carried across the membrane as hydrogens on the quinol. In the process called Q cycle, 2 protons are consumed from the matrix, 4 protons are released into the intermembrane space and 2 electrons are passed to cytochrome c. The Rieske protein is a catalytic core subunit containing a [2Fe-2S] iron-sulfur cluster. It cycles between 2 conformational states during catalysis to transfer electrons from the quinol bound in the Q(0) site in cytochrome b to cytochrome c1. This chain is Cytochrome b-c1 complex subunit Rieske, mitochondrial (rip1), found in Schizosaccharomyces pombe (strain 972 / ATCC 24843) (Fission yeast).